A 246-amino-acid polypeptide reads, in one-letter code: 1-(5-phosphoribosyl)-5-[(5-phosphoribosylamino)methylideneamino] imidazole-4-carboxamide isomerase (246 aa).

D8 acts as the Proton acceptor in catalysis. Residue D130 is the Proton donor of the active site.

This sequence belongs to the HisA/HisF family.

It is found in the cytoplasm. It catalyses the reaction 1-(5-phospho-beta-D-ribosyl)-5-[(5-phospho-beta-D-ribosylamino)methylideneamino]imidazole-4-carboxamide = 5-[(5-phospho-1-deoxy-D-ribulos-1-ylimino)methylamino]-1-(5-phospho-beta-D-ribosyl)imidazole-4-carboxamide. Its pathway is amino-acid biosynthesis; L-histidine biosynthesis; L-histidine from 5-phospho-alpha-D-ribose 1-diphosphate: step 4/9. The polypeptide is 1-(5-phosphoribosyl)-5-[(5-phosphoribosylamino)methylideneamino] imidazole-4-carboxamide isomerase (Hydrogenovibrio crunogenus (strain DSM 25203 / XCL-2) (Thiomicrospira crunogena)).